The following is a 398-amino-acid chain: UDP-N-acetylglucosamine--N-acetylmuramyl-(pentapeptide) pyrophosphoryl-undecaprenol N-acetylglucosamine transferase (398 aa).

UDP-N-acetyl-alpha-D-glucosamine-binding positions include 11–13 (TGG), Asn-124, Arg-164, Ser-192, and Gln-318.

The protein belongs to the glycosyltransferase 28 family. MurG subfamily.

It is found in the cell membrane. The catalysed reaction is di-trans,octa-cis-undecaprenyl diphospho-N-acetyl-alpha-D-muramoyl-L-alanyl-D-glutamyl-meso-2,6-diaminopimeloyl-D-alanyl-D-alanine + UDP-N-acetyl-alpha-D-glucosamine = di-trans,octa-cis-undecaprenyl diphospho-[N-acetyl-alpha-D-glucosaminyl-(1-&gt;4)]-N-acetyl-alpha-D-muramoyl-L-alanyl-D-glutamyl-meso-2,6-diaminopimeloyl-D-alanyl-D-alanine + UDP + H(+). Its pathway is cell wall biogenesis; peptidoglycan biosynthesis. Its function is as follows. Cell wall formation. Catalyzes the transfer of a GlcNAc subunit on undecaprenyl-pyrophosphoryl-MurNAc-pentapeptide (lipid intermediate I) to form undecaprenyl-pyrophosphoryl-MurNAc-(pentapeptide)GlcNAc (lipid intermediate II). This is UDP-N-acetylglucosamine--N-acetylmuramyl-(pentapeptide) pyrophosphoryl-undecaprenol N-acetylglucosamine transferase from Deinococcus radiodurans (strain ATCC 13939 / DSM 20539 / JCM 16871 / CCUG 27074 / LMG 4051 / NBRC 15346 / NCIMB 9279 / VKM B-1422 / R1).